A 516-amino-acid chain; its full sequence is Histone H4 transcription factor (516 aa).

3 C2H2-type zinc fingers span residues 15 to 39 (LQCEWGSCSFVCSAMEEFCEHVTQH), 127 to 151 (FLCLWEHCENSFDNPEWFYRHVEAH), and 167 to 191 (VLCGWKGCTCTFKDRFKLREHLRSH). The segment at 197–219 (VACPTCGGMFANNTKFLDHIRRQ) adopts a C2H2-type 4; degenerate zinc-finger fold. C2H2-type zinc fingers lie at residues 227 to 249 (FQCSHCSKRFATERLLRDHMRNH), 253 to 276 (YKCPLCDMTCPLPSSLRNHMRFRH), 282 to 304 (FKCDCCDYSCKNLIDLRKHLDTH), 310 to 335 (YSCDFENCTFSARSLYSIKSHYRKVH), and 343 to 366 (YRCHVCDKCFTRGNNLTVHLRKKH). The segment at 371–516 (PSGHPRFRYK…AAEEPEVQMV (146 aa)) is interaction with NPAT. A required for activation of histone H4 transcription and contributes to DNA-binding region spans residues 372–405 (SGHPRFRYKEHEDGYMRLQLVRYESVELTQQLLR). Disordered stretches follow at residues 429–456 (TVPGEPGPQEEAEEEGGGGEGIALPASQ) and 486–516 (PGEPPPASEPPSGGVMGELQGAAEEPEVQMV). Residues 436 to 445 (PQEEAEEEGG) are compositionally biased toward acidic residues.

In terms of assembly, binds MBD2 and a histone deacetylase complex. Interacts with NPAT. Post-translationally, ubiquitinated. Ubiquitination may lead to proteasome-mediated degradation.

The protein localises to the nucleus. Functionally, transcriptional repressor that binds to the consensus sequence 5'-CGGACGTT-3' and to the RB1 promoter. Transcriptional activator that promotes histone H4 gene transcription at the G1/S phase transition in conjunction with NPAT. Also activates transcription of the ATM and PRKDC genes. Autoregulates its expression by associating with its own promoter. The polypeptide is Histone H4 transcription factor (HINFP) (Bos taurus (Bovine)).